A 281-amino-acid polypeptide reads, in one-letter code: 39kDa core protein OPG130 (281 aa).

The span at 1-22 (MDFFNKFSQGLAESSTPKSSIY) shows a compositional bias: polar residues. Disordered regions lie at residues 1-33 (MDFF…DTKK), 93-112 (LPSS…TSSD), and 149-188 (NKDQ…TVTP). A compositionally biased stretch (basic and acidic residues) spans 24–33 (SEEKDPDTKK). The span at 94–112 (PSSTVPTPKPRQQTNTSSD) shows a compositional bias: polar residues. Positions 154-175 (TTTPPSTQPSQTLPTTTCTQQS) are enriched in low complexity.

The protein belongs to the orthopoxvirus OPG130 family. Interacts with OPG136 and its cleaved form. Its phosphorylation state is regulated by the OPG054 kinase and the OPG106 phosphatase.

The protein resides in the virion. The protein localises to the host endoplasmic reticulum-Golgi intermediate compartment membrane. Its function is as follows. Component of the virion core. Participates in virion assembly. In Vaccinia virus (strain Western Reserve) (VACV), this protein is 39kDa core protein OPG130 (OPG130).